The chain runs to 1179 residues: Putative ankyrin repeat protein RF_0381 (1179 aa).

18 ANK repeats span residues 282–311 (NGYQ…MHRQ), 604–633 (NKDQ…NPNA), 637–666 (HGVI…DVNA), 670–699 (NGET…NIHA), 703–732 (NGET…DVNA), 736–765 (NGLT…DVNA), 769–798 (SGET…DVNA), 802–831 (NGET…NVNN), 833–860 (KTIL…DIHA), 864–893 (SGET…DIHA), 897–926 (SGET…DIHA), 930–959 (SGET…DIHA), 963–992 (SGET…DINT), 996–1025 (DGLT…DVNA), 1029–1058 (SGET…DVNA), 1062–1091 (DGLT…DVNA), 1095–1124 (SGET…DINT), and 1128–1157 (SGET…DINL).

The protein is Putative ankyrin repeat protein RF_0381 of Rickettsia felis (strain ATCC VR-1525 / URRWXCal2) (Rickettsia azadi).